The sequence spans 62 residues: Pelophylaxin-4 (62 aa).

The N-terminal stretch at 1–22 is a signal peptide; sequence MLTLKKSMLLIFFLGTINFSLC. A propeptide spanning residues 23–45 is cleaved from the precursor; sequence EQERNADEEERRDEPEERDVEVQ. At L60 the chain carries Leucine amide. A propeptide is located at residue G61.

In terms of tissue distribution, expressed by the skin glands.

It localises to the secreted. Functionally, antimicrobial peptide. The polypeptide is Pelophylaxin-4 (Pelophylax fukienensis (Fukien gold-striped pond frog)).